A 336-amino-acid chain; its full sequence is Alpha-N-acetylgalactosaminide alpha-2,6-sialyltransferase 5 (336 aa).

Over 1-8 (MKTLMRHG) the chain is Cytoplasmic. A helical; Signal-anchor for type II membrane protein membrane pass occupies residues 9–29 (LAVCLVLTTMCTSLLLVYSSL). Residues 30–336 (GSQKERPPQQ…VNHAEGKPVF (307 aa)) lie on the Lumenal side of the membrane. The disordered stretch occupies residues 34-76 (ERPPQQQQQQQQQQQQAATATGSTQLVESSPQPRRTAPAGPRQ). Residues 38–49 (QQQQQQQQQQQQ) show a composition bias toward low complexity. Over residues 50 to 66 (AATATGSTQLVESSPQP) the composition is skewed to polar residues. The cysteines at positions 96 and 245 are disulfide-linked. 2 N-linked (GlcNAc...) asparagine glycosylation sites follow: Asn137 and Asn161.

It belongs to the glycosyltransferase 29 family. As to expression, high expression in forebrain and to a lesser extent in cerebellum. No expression in salivary gland, intestine, liver, kidney, heart, lung, thymus and spleen.

Its subcellular location is the golgi apparatus membrane. It carries out the reaction a ganglioside GM1b (d18:1(4E)) + CMP-N-acetyl-beta-neuraminate = a ganglioside GD1alpha (d18:1(4E)) + CMP + H(+). It catalyses the reaction N-acetyl-alpha-neuraminosyl-(2-&gt;3)-beta-D-galactosyl-(1-&gt;3)-N-acetyl-beta-D-glucosaminyl-(1-&gt;3)-beta-D-galactosyl-(1-&gt;4)-beta-D-glucosyl-(1&lt;-&gt;1')-N-acyl-sphing-4-enine + CMP-N-acetyl-beta-neuraminate = N-acetyl-alpha-neuraminosyl-(2-&gt;3)-beta-D-galactosyl-(1-&gt;3)-[N-acetyl-alpha-neuraminosyl-(2-&gt;6)]-N-acetyl-beta-D-glucosaminyl-(1-&gt;3)-beta-D-galactosyl-(1-&gt;4)-beta-D-glucosyl-(1&lt;-&gt;1')-N-acyl-sphing-4-enine + CMP + H(+). The protein operates within glycolipid biosynthesis. In terms of biological role, predominantly catalyzes the biosynthesis of ganglioside GD1alpha from GM1b in the brain, by transferring the sialyl group (N-acetyl-alpha-neuraminyl or NeuAc) from CMP-NeuAc to the GalNAc residue on the NeuAc-alpha-2,3-Gal-beta-1,3-GalNAc sequence of GM1b. GD1alpha is a critical molecule in the communication and interaction between neuronal cells and their supportive cells, particularly in brain tissues, and functions as an adhesion molecule in the process of metastasis. Also shows activity towards sialyl Lc4Cer (N-acetyl-alpha-neuraminosyl-(2-&gt;3)-beta-D-galactosyl-(1-&gt;3)-N-acetyl-beta-D-glucosaminyl-(1-&gt;3)-beta-D-galactosyl-(1-&gt;4)-beta-D-glucosyl-(1&lt;-&gt;1')-N-acyl-sphing-4-enine) generating disialyl Lc4Cer, which can lead to the synthesis of disialyl Lewis a (Le(a)), suggested to be a cancer-associated antigen. In Mus musculus (Mouse), this protein is Alpha-N-acetylgalactosaminide alpha-2,6-sialyltransferase 5 (St6galnac5).